The sequence spans 45 residues: Large ribosomal subunit protein bL34 (45 aa).

Residues methionine 1–valine 45 form a disordered region. Positions serine 10 to valine 45 are enriched in basic residues.

The protein belongs to the bacterial ribosomal protein bL34 family.

This chain is Large ribosomal subunit protein bL34, found in Parasynechococcus marenigrum (strain WH8102).